Here is a 444-residue protein sequence, read N- to C-terminus: Glutamate--tRNA ligase 1 (444 aa).

Residues proline 10 to asparagine 20 carry the 'HIGH' region motif. The 'KMSKS' region motif lies at glycine 241–arginine 245. Lysine 244 contributes to the ATP binding site.

Belongs to the class-I aminoacyl-tRNA synthetase family. Glutamate--tRNA ligase type 1 subfamily. In terms of assembly, monomer.

Its subcellular location is the cytoplasm. The catalysed reaction is tRNA(Glu) + L-glutamate + ATP = L-glutamyl-tRNA(Glu) + AMP + diphosphate. Catalyzes the attachment of glutamate to tRNA(Glu) in a two-step reaction: glutamate is first activated by ATP to form Glu-AMP and then transferred to the acceptor end of tRNA(Glu). The protein is Glutamate--tRNA ligase 1 of Rhodospirillum rubrum (strain ATCC 11170 / ATH 1.1.1 / DSM 467 / LMG 4362 / NCIMB 8255 / S1).